Reading from the N-terminus, the 76-residue chain is Small ribosomal subunit protein bS18 (76 aa).

This sequence belongs to the bacterial ribosomal protein bS18 family. Part of the 30S ribosomal subunit. Forms a tight heterodimer with protein bS6.

In terms of biological role, binds as a heterodimer with protein bS6 to the central domain of the 16S rRNA, where it helps stabilize the platform of the 30S subunit. This is Small ribosomal subunit protein bS18 from Marinomonas sp. (strain MWYL1).